The following is a 106-amino-acid chain: Large ribosomal subunit protein uL24 (106 aa).

This sequence belongs to the universal ribosomal protein uL24 family. Part of the 50S ribosomal subunit.

In terms of biological role, one of two assembly initiator proteins, it binds directly to the 5'-end of the 23S rRNA, where it nucleates assembly of the 50S subunit. One of the proteins that surrounds the polypeptide exit tunnel on the outside of the subunit. The polypeptide is Large ribosomal subunit protein uL24 (Bordetella bronchiseptica (strain ATCC BAA-588 / NCTC 13252 / RB50) (Alcaligenes bronchisepticus)).